The following is a 218-amino-acid chain: Oxidoreductase claN (218 aa).

NADP(+) contacts are provided by lysine 38, aspartate 57, and asparagine 82. Catalysis depends on serine 134, which acts as the Proton donor. NADP(+) is bound by residues tyrosine 148, lysine 152, and threonine 183. Tyrosine 148 serves as the catalytic Proton acceptor. The active-site Lowers pKa of active site Tyr is lysine 152.

It belongs to the short-chain dehydrogenases/reductases (SDR) family.

The protein operates within pigment biosynthesis. Oxidoreductase; part of the gene cluster that mediates the biosynthesis of the bianthraquinone cladofulvin, a conidial pigment not required for virulence but that plays a role in fitness and resistance to environmental stresses including UV light and low-temperature stress. The pathway begins with the synthesis of atrochrysone thioester by the polyketide synthase (PKS) claG. The atrochrysone carboxyl ACP thioesterase claF then breaks the thioester bond and releases the atrochrysone carboxylic acid from claG. This compound is decarboxylated by claH to yield emodin, which is further converted to chrysophanol hydroquinone by the reductase claC and the dehydratase claB. The cytochrome P450 monooxygenase claM then catalyzes the dimerization of nataloe-emodin to cladofulvin. The protein is Oxidoreductase claN of Passalora fulva (Tomato leaf mold).